Here is a 131-residue protein sequence, read N- to C-terminus: Cuticle protein 79, isoform A (131 aa).

A run of 3 repeats spans residues 37 to 40 (AAPA), 45 to 48 (AAPA), and 53 to 56 (AAPA).

Component of the cuticle of migratory locust which contains more than 100 different structural proteins. This chain is Cuticle protein 79, isoform A, found in Locusta migratoria (Migratory locust).